Reading from the N-terminus, the 404-residue chain is Glycosylated lysosomal membrane protein (404 aa).

A signal peptide spans 1 to 35; it reads MRGSVERGWGWGHCASSPLLLWTLLLFAAPFGLLG. Topologically, residues 36–371 are lumenal; sequence EKTRQLSLEV…GRLVPTSPGH (336 aa). N-linked (GlcNAc...) asparagine glycans are attached at residues N65, N134, N159, N186, and N229. The helical transmembrane segment at 372-392 threads the bilayer; sequence HGSALGAPGLMLLGGGLVLLL. The Cytoplasmic segment spans residues 393–404; the sequence is HHRKYSEYQSIN. Positions 400–404 match the Lysosomal targeting motif motif; sequence YQSIN.

This sequence belongs to the GLMP family. As to quaternary structure, interacts (via lumenal domain) with lysosomal protein MFSD1; the interaction starts while both proteins are still in the endoplasmic reticulum and is required for stabilization of MFSD1 in lysosomes but has no direct effect on its targeting to lysosomes or transporter activity. Post-translationally, highly N-glycosylated. N-glycosylation is essential for GLMP stability and for MFSD1 lysosomal localization.

Its subcellular location is the lysosome membrane. Its function is as follows. Required to protect lysosomal transporter MFSD1 from lysosomal proteolysis and for MFSD1 lysosomal localization. In Pongo abelii (Sumatran orangutan), this protein is Glycosylated lysosomal membrane protein.